The following is a 352-amino-acid chain: DNA integrity scanning protein DisA (352 aa).

Positions 3 to 143 constitute a DAC domain; that stretch reads PQELIEKIKL…NYKYVVNQVD (141 aa). ATP is bound by residues G71, L89, and 102–106; that span reads TRHRT.

The protein belongs to the DisA family. As to quaternary structure, homooctamer. Requires Mg(2+) as cofactor.

The enzyme catalyses 2 ATP = 3',3'-c-di-AMP + 2 diphosphate. Functionally, participates in a DNA-damage check-point. DisA forms globular foci that rapidly scan along the chromosomes searching for lesions. In terms of biological role, also has diadenylate cyclase activity, catalyzing the condensation of 2 ATP molecules into cyclic di-AMP (c-di-AMP). c-di-AMP likely acts as a signaling molecule that may couple DNA integrity with a cellular process. The chain is DNA integrity scanning protein DisA from Thermotoga petrophila (strain ATCC BAA-488 / DSM 13995 / JCM 10881 / RKU-1).